The sequence spans 372 residues: Queuine tRNA-ribosyltransferase (372 aa).

Asp-92 acts as the Proton acceptor in catalysis. Substrate-binding positions include 92–96 (DSGGY), Asp-146, Gln-188, and Gly-215. Residues 246–252 (GIGSLRE) are RNA binding. Asp-265 functions as the Nucleophile in the catalytic mechanism. Residues 270 to 274 (TRLGR) are RNA binding; important for wobble base 34 recognition. Zn(2+) is bound by residues Cys-303, Cys-305, Cys-308, and His-334.

This sequence belongs to the queuine tRNA-ribosyltransferase family. In terms of assembly, homodimer. Within each dimer, one monomer is responsible for RNA recognition and catalysis, while the other monomer binds to the replacement base PreQ1. Requires Zn(2+) as cofactor.

The enzyme catalyses 7-aminomethyl-7-carbaguanine + guanosine(34) in tRNA = 7-aminomethyl-7-carbaguanosine(34) in tRNA + guanine. It functions in the pathway tRNA modification; tRNA-queuosine biosynthesis. Functionally, catalyzes the base-exchange of a guanine (G) residue with the queuine precursor 7-aminomethyl-7-deazaguanine (PreQ1) at position 34 (anticodon wobble position) in tRNAs with GU(N) anticodons (tRNA-Asp, -Asn, -His and -Tyr). Catalysis occurs through a double-displacement mechanism. The nucleophile active site attacks the C1' of nucleotide 34 to detach the guanine base from the RNA, forming a covalent enzyme-RNA intermediate. The proton acceptor active site deprotonates the incoming PreQ1, allowing a nucleophilic attack on the C1' of the ribose to form the product. After dissociation, two additional enzymatic reactions on the tRNA convert PreQ1 to queuine (Q), resulting in the hypermodified nucleoside queuosine (7-(((4,5-cis-dihydroxy-2-cyclopenten-1-yl)amino)methyl)-7-deazaguanosine). The protein is Queuine tRNA-ribosyltransferase of Prochlorococcus marinus (strain MIT 9211).